Consider the following 386-residue polypeptide: Oxytocin receptor (386 aa).

A disordered region spans residues 1–31 (MEGVLAANWSAEAVNSSAAPPEAEGNRTAGP). Residues 1–38 (MEGVLAANWSAEAVNSSAAPPEAEGNRTAGPPQRNEAL) lie on the Extracellular side of the membrane. 3 N-linked (GlcNAc...) asparagine glycosylation sites follow: asparagine 8, asparagine 15, and asparagine 26. The chain crosses the membrane as a helical span at residues 39–63 (ARVEVAVLCLILFLALSGNACVLLA). The Cytoplasmic portion of the chain corresponds to 64–74 (LRTTRHKHSRL). Residues 75–97 (FFFMKHLSIADLVVAVFQVLPQL) form a helical membrane-spanning segment. The Extracellular segment spans residues 98–113 (LWDITFRFYGPDLLCR). Cysteine 112 and cysteine 187 are joined by a disulfide. Residues 114-135 (LVKYLQVVGMFASTYLLLLMSL) form a helical membrane-spanning segment. Residues 136–154 (DRCLAICQPLRALRRPADR) are Cytoplasmic-facing. A helical transmembrane segment spans residues 155-175 (LAVLATWLGCLVASAPQVHIF). The Extracellular segment spans residues 176–202 (SLREVADGVFDCWAVFIQPWGPKAYIT). The chain crosses the membrane as a helical span at residues 203-225 (WITLAVYIVPVIVLAACYGLISF). At 226-277 (KIWQNLRLKTAAEAAEAIAGTEGAAAGSRGRAALARVSSVKLISKAKIRTVK) the chain is on the cytoplasmic side. Residues 278–296 (MTFIIVLAFIVCWTPFFFV) form a helical membrane-spanning segment. Topologically, residues 297 to 311 (QMWSVWDADAPKEAS) are extracellular. A helical membrane pass occupies residues 312–334 (AFIIAMLLASLNSCCNPWIYMLF). Residues 335–386 (TGHLFHELVQRFLCCSSSHLKTSRPGETSVSKKSNSSTFVLSQHSSSQKSCS) lie on the Cytoplasmic side of the membrane. Residues 355 to 375 (KTSRPGETSVSKKSNSSTFVL) are compositionally biased toward polar residues. The segment at 355–386 (KTSRPGETSVSKKSNSSTFVLSQHSSSQKSCS) is disordered. 2 positions are modified to phosphoserine: serine 368 and serine 370. Over residues 376 to 386 (SQHSSSQKSCS) the composition is skewed to low complexity.

It belongs to the G-protein coupled receptor 1 family. Vasopressin/oxytocin receptor subfamily.

It is found in the cell membrane. In terms of biological role, receptor for oxytocin. The activity of this receptor is mediated by G proteins which activate a phosphatidylinositol-calcium second messenger system. This chain is Oxytocin receptor (OXTR), found in Sus scrofa (Pig).